The primary structure comprises 128 residues: Small ribosomal subunit protein uS11 (128 aa).

This sequence belongs to the universal ribosomal protein uS11 family. Part of the 30S ribosomal subunit. Interacts with proteins S7 and S18. Binds to IF-3.

In terms of biological role, located on the platform of the 30S subunit, it bridges several disparate RNA helices of the 16S rRNA. Forms part of the Shine-Dalgarno cleft in the 70S ribosome. In Wolbachia pipientis subsp. Culex pipiens (strain wPip), this protein is Small ribosomal subunit protein uS11.